The primary structure comprises 353 residues: NADH-quinone oxidoreductase subunit H (353 aa).

9 helical membrane-spanning segments follow: residues 8–28 (LLVY…LFIW), 75–95 (GVFW…FAAI), 108–128 (IGIL…FMAG), 148–168 (VSYE…TGSL), 178–198 (SVPF…AAMA), 229–249 (LFYL…TTLF), 258–278 (LHPV…IIWV), 297–317 (FLLP…LAAP), and 319–339 (MNTA…ILLF).

The protein belongs to the complex I subunit 1 family. In terms of assembly, NDH-1 is composed of 14 different subunits. Subunits NuoA, H, J, K, L, M, N constitute the membrane sector of the complex.

The protein localises to the cell membrane. The enzyme catalyses a quinone + NADH + 5 H(+)(in) = a quinol + NAD(+) + 4 H(+)(out). Its function is as follows. NDH-1 shuttles electrons from NADH, via FMN and iron-sulfur (Fe-S) centers, to quinones in the respiratory chain. The immediate electron acceptor for the enzyme in this species is believed to be ubiquinone. Couples the redox reaction to proton translocation (for every two electrons transferred, four hydrogen ions are translocated across the cytoplasmic membrane), and thus conserves the redox energy in a proton gradient. This subunit may bind ubiquinone. The sequence is that of NADH-quinone oxidoreductase subunit H from Dehalococcoides mccartyi (strain ATCC BAA-2266 / KCTC 15142 / 195) (Dehalococcoides ethenogenes (strain 195)).